Consider the following 172-residue polypeptide: Auxin-responsive protein IAA30 (172 aa).

The segment covering 1–18 (MGRGRSSSSSSIESSCKS) has biased composition (low complexity). The disordered stretch occupies residues 1–28 (MGRGRSSSSSSIESSCKSNPFGVSSSNT). The EAR-like (transcriptional repression) signature appears at 35-39 (LRLGL). The 90-residue stretch at 82-171 (SFYVKVNMEG…RRLKISRAYH (90 aa)) folds into the PB1 domain.

Belongs to the Aux/IAA family. Homodimers and heterodimers.

The protein resides in the nucleus. In terms of biological role, aux/IAA proteins are short-lived transcriptional factors that function as repressors of early auxin response genes at low auxin concentrations. Repression is thought to result from the interaction with auxin response factors (ARFs), proteins that bind to the auxin-responsive promoter element (AuxRE). Formation of heterodimers with ARF proteins may alter their ability to modulate early auxin response genes expression. This chain is Auxin-responsive protein IAA30 (IAA30), found in Arabidopsis thaliana (Mouse-ear cress).